We begin with the raw amino-acid sequence, 483 residues long: MTERSVGYVETKHHHLKEPFRLVSGDELAEVSIAYETYGKLNSDKSNVILICHALTGDAHAAGWHEGDKKPGWWDIVIGPGKAFDTNKYFIICSNVLGGCKGTTGPSSTNPQSGLPYGLSFPRITIEDMVNLQHTLLNNLGISRLYAIAGGSMGGMQVLQWAVSYPGFMKRSIVLASTAISSPQQIAFNEVARQAIIRDPYWNDGDYYGVELPKQGLSLARMIGHITYLSDDSMHDKFGRDIRENEMFQVESYLHHQGDTFTSRFDPNSYLYLTGAIDKFDLSNGYSLAKTFSNIESEFMVISVSSDWLYPSYQSEEIVQALGSNDVDVQYRKLISHFGHDAFLLEKGQLNYLLSTFLGHLTVGDVMSEDVSTLHEGCTLEEAAQLMILKNATHIPILATSGRITGIVTSWDITRAVANKISSIENILSRDILTSRPDESLSSAALVMEDHAISALPVVDDRGCLVGILSSDTISAMVGKGTK.

The AB hydrolase-1 domain maps to 47 to 346 (NVILICHALT…HFGHDAFLLE (300 aa)). Catalysis depends on Ser-152, which acts as the Nucleophile. Arg-221 provides a ligand contact to substrate. Residues Asp-307 and His-340 contribute to the active site. Asp-341 contacts substrate. CBS domains are found at residues 367–423 (MSED…KISS) and 428–483 (LSRD…KGTK).

Belongs to the AB hydrolase superfamily. MetX family. Homodimer.

The protein localises to the cytoplasm. It catalyses the reaction L-homoserine + acetyl-CoA = O-acetyl-L-homoserine + CoA. The protein operates within amino-acid biosynthesis; L-methionine biosynthesis via de novo pathway; O-acetyl-L-homoserine from L-homoserine: step 1/1. Transfers an acetyl group from acetyl-CoA to L-homoserine, forming acetyl-L-homoserine. This is Homoserine O-acetyltransferase from Methanohalophilus mahii (strain ATCC 35705 / DSM 5219 / SLP).